The following is a 398-amino-acid chain: Cysteine protease ATG4A (398 aa).

C77 serves as the catalytic Nucleophile. Active-site residues include D279 and H281. The LIR signature appears at 393 to 396 (FEIL).

Belongs to the peptidase C54 family. Interacts with ATG9A; the interaction is direct.

The protein resides in the cytoplasm. The catalysed reaction is [protein]-C-terminal L-amino acid-glycyl-phosphatidylethanolamide + H2O = [protein]-C-terminal L-amino acid-glycine + a 1,2-diacyl-sn-glycero-3-phosphoethanolamine. With respect to regulation, inhibited by N-ethylmaleimide. Redox-regulated during autophagy since reducing conditions activate ATG4A whereas an oxidizing environment such as the presence of H(2)O(2) inhibits its activity. Its function is as follows. Cysteine protease that plays a key role in autophagy by mediating both proteolytic activation and delipidation of ATG8 family proteins. The protease activity is required for proteolytic activation of ATG8 family proteins: cleaves the C-terminal amino acid of ATG8 proteins to reveal a C-terminal glycine. Exposure of the glycine at the C-terminus is essential for ATG8 proteins conjugation to phosphatidylethanolamine (PE) and insertion to membranes, which is necessary for autophagy. Preferred substrate is GABARAPL2 followed by MAP1LC3A and GABARAP. Protease activity is also required to counteract formation of high-molecular weight conjugates of ATG8 proteins (ATG8ylation): acts as a deubiquitinating-like enzyme that removes ATG8 conjugated to other proteins, such as ATG3. In addition to the protease activity, also mediates delipidation of ATG8 family proteins. Catalyzes delipidation of PE-conjugated forms of ATG8 proteins during macroautophagy. Compared to ATG4B, the major protein for proteolytic activation of ATG8 proteins, shows weaker ability to cleave the C-terminal amino acid of ATG8 proteins, while it displays stronger delipidation activity. Involved in phagophore growth during mitophagy independently of its protease activity and of ATG8 proteins: acts by regulating ATG9A trafficking to mitochondria and promoting phagophore-endoplasmic reticulum contacts during the lipid transfer phase of mitophagy. In terms of biological role, (Microbial infection) Mediates cleavage of an ATG8 protein homolog coded in the genome of cytopathogenic bovine viral diarrhea virus (BVDV). In Bos taurus (Bovine), this protein is Cysteine protease ATG4A.